A 175-amino-acid polypeptide reads, in one-letter code: uncharacterized protein (175 aa).

This is an uncharacterized protein from Mycobacterium tuberculosis (strain ATCC 25618 / H37Rv).